Reading from the N-terminus, the 555-residue chain is T-complex protein 1 subunit gamma (555 aa).

The disordered stretch occupies residues 527 to 555 (KKKQAPGSGPSKPTIETEGDADNEQILPD).

The protein belongs to the TCP-1 chaperonin family. As to quaternary structure, heterooligomeric complex of about 850 to 900 kDa that forms two stacked rings, 12 to 16 nm in diameter. Interacts with CCT8.

It is found in the cytoplasm. Functionally, molecular chaperone; assists the folding of proteins upon ATP hydrolysis. Known to play a role, in vitro, in the folding of actin and tubulin. This Arabidopsis thaliana (Mouse-ear cress) protein is T-complex protein 1 subunit gamma.